The primary structure comprises 656 residues: Threonine--tRNA ligase (656 aa).

Residues 1–63 enclose the TGS domain; the sequence is MAEIQLTFPD…LEDGAIEIIT (63 aa). The segment at 243 to 541 is catalytic; it reads DHRVIGNQLD…LTEIYKGAFP (299 aa). 3 residues coordinate Zn(2+): Cys337, His388, and His518.

Belongs to the class-II aminoacyl-tRNA synthetase family. Homodimer. The cofactor is Zn(2+).

Its subcellular location is the cytoplasm. The catalysed reaction is tRNA(Thr) + L-threonine + ATP = L-threonyl-tRNA(Thr) + AMP + diphosphate + H(+). Functionally, catalyzes the attachment of threonine to tRNA(Thr) in a two-step reaction: L-threonine is first activated by ATP to form Thr-AMP and then transferred to the acceptor end of tRNA(Thr). Also edits incorrectly charged L-seryl-tRNA(Thr). This chain is Threonine--tRNA ligase, found in Latilactobacillus sakei subsp. sakei (strain 23K) (Lactobacillus sakei subsp. sakei).